A 609-amino-acid polypeptide reads, in one-letter code: MLNLSAEQRPRLRQPIVAVLGHVDHGKTTLLDKIRGTVVALKEPGQITQHIGASLVPTDVIEKVTEPLKKIIPTVKLELPGLLFIDTPGHEIFSNLRRRGGAVADLAILVVDLNEGFQPQTYEAVEILKQRRVPFVVAANKIDRIPGWRSYPDQPFLISYRKQSEEVRERLDNKIYEIMGELAKLGFDSERFDRITNFTRQIAIVPISAKTGEGIPELLAVLAGLAQRYMKGRLKYVEGPAKGVIMEVKEEPGYGSTIDTIIYDGIIRQGDTIVVGGIEGPIVTKVRALLVPAPLTEMRATKRFEPVEEVSAAAGVKIVAPGLEKAVAGAPVYVVDSPEKLEELKEQVKREVEEVMIETDKEGVIVKADTLGTLEALVQFLKNRGIPVRMARVGPVTKRDIVEAMTVKSKNKEYGVILAFNVKVLPEAKELAEKEGIKIFQHNVIYRLIEEFEEWLKALREEEKRKVLETLVRPGKIRILPGFVFRRSDPAIVGVEVLGGVIKPKYPLMKEDGSRVGSILQIQDKGQSVPEARAGQQVAISIKGRVMVGRHIHEGDVLYTDVPAEHAKLWLTKFKNELSDDEKFVLQEIIKIKRKQNPLYGVVLPSPSS.

The 219-residue stretch at 12 to 230 folds into the tr-type G domain; it reads LRQPIVAVLG…VLAGLAQRYM (219 aa). The tract at residues 21 to 28 is G1; that stretch reads GHVDHGKT. 21 to 28 lines the GTP pocket; that stretch reads GHVDHGKT. Residues 46-50 are G2; that stretch reads QITQH. The G3 stretch occupies residues 86 to 89; sequence DTPG. Residues 86-90 and 140-143 each bind GTP; these read DTPGH and NKID. Residues 140–143 form a G4 region; the sequence is NKID. Residues 208–210 form a G5 region; sequence SAK.

The protein belongs to the TRAFAC class translation factor GTPase superfamily. Classic translation factor GTPase family. IF-2 subfamily.

Function in general translation initiation by promoting the binding of the formylmethionine-tRNA to ribosomes. Seems to function along with eIF-2. The polypeptide is Probable translation initiation factor IF-2 (Ignicoccus hospitalis (strain KIN4/I / DSM 18386 / JCM 14125)).